Here is a 436-residue protein sequence, read N- to C-terminus: GTPase Der (436 aa).

EngA-type G domains are found at residues 4–167 (PIVA…NKES) and 176–351 (IRLS…ENHK). GTP is bound by residues 10-17 (GKPNVGKS), 57-61 (DTGGI), 119-122 (NKVD), 182-189 (GRPNVGKS), 229-233 (DTAGM), and 294-297 (NKWD). The KH-like domain occupies 352-436 (KRVQSSTLNE…PIHIIPRKRN (85 aa)).

This sequence belongs to the TRAFAC class TrmE-Era-EngA-EngB-Septin-like GTPase superfamily. EngA (Der) GTPase family. As to quaternary structure, associates with the 50S ribosomal subunit.

Functionally, GTPase that plays an essential role in the late steps of ribosome biogenesis. This Staphylococcus epidermidis (strain ATCC 35984 / DSM 28319 / BCRC 17069 / CCUG 31568 / BM 3577 / RP62A) protein is GTPase Der.